Consider the following 218-residue polypeptide: UPF0319 protein PM0395 (218 aa).

A signal peptide spans 1–21 (MKFRFAALASVALLTSTVSVA).

The protein belongs to the UPF0319 family.

The chain is UPF0319 protein PM0395 from Pasteurella multocida (strain Pm70).